A 584-amino-acid polypeptide reads, in one-letter code: Inactive metallocarboxypeptidase ECM14 (584 aa).

A signal peptide spans 1–20 (MHLLPVITAVALIYTPLASA). The propeptide occupies 21–174 (VPSSSNPQFP…QAVYESYPQP (154 aa)). One can recognise a Peptidase M14 domain in the interval 202–524 (DYQPLSVMTP…NAVLEFGKFL (323 aa)). Positions 267 and 270 each coordinate Zn(2+). Residues 267–270 (HARE), arginine 325, and 342–343 (DR) each bind substrate. A disulfide bridge links cysteine 336 with cysteine 359. Asparagine 383 and asparagine 389 each carry an N-linked (GlcNAc...) asparagine glycan. Histidine 399 is a binding site for Zn(2+). 400-401 (SY) contacts substrate. The segment at 564 to 584 (QQLDDEDGEADSHWVLRTQRS) is disordered.

The protein belongs to the peptidase M14 family. Zn(2+) serves as cofactor.

The protein resides in the vacuole. It localises to the secreted. Its function is as follows. Inactive carboxypeptidase that may play a role in cell wall organization and biogenesis. In Uncinocarpus reesii (strain UAMH 1704), this protein is Inactive metallocarboxypeptidase ECM14 (ECM14).